Consider the following 151-residue polypeptide: Ribosome maturation factor RimP (151 aa).

It belongs to the RimP family.

Its subcellular location is the cytoplasm. In terms of biological role, required for maturation of 30S ribosomal subunits. The polypeptide is Ribosome maturation factor RimP (Vibrio cholerae serotype O1 (strain ATCC 39541 / Classical Ogawa 395 / O395)).